Reading from the N-terminus, the 1604-residue chain is MWVSWAPGLWLLGLWATFGHGANTGAQCPPSQQEGLKLEHSSSLPANVTGFNLIHRLSLMKTSAIKKIRNPKGPLILRLGAAPVTQPTRRVFPRGLPEEFALVLTLLLKKHTHQKTWYLFQVTDANGYPQISLEVNSQERSLELRAQGQDGDFVSCIFPVPQLFDLRWHKLMLSVAGRVASVHVDCSSASSQPLGPRRPMRPVGHVFLGLDAEQGKPVSFDLQQVHIYCDPELVLEEGCCEILPAGCPPETSKARRDTQSNELIEINPQSEGKVYTRCFCLEEPQNSEVDAQLTGRISQKAERGAKVHQETAADECPPCVHGARDSNVTLAPSGPKGGKGERGLPGPPGSKGEKGARGNDCVRISPDAPLQCAEGPKGEKGESGALGPSGLPGSTGEKGQKGEKGDGGIKGVPGKPGRDGRPGEICVIGPKGQKGDPGFVGPEGLAGEPGPPGLPGPPGIGLPGTPGDPGGPPGPKGDKGSSGIPGKEGPGGKPGKPGVKGEKGDPCEVCPTLPEGFQNFVGLPGKPGPKGEPGDPVPARGDPGIQGIKGEKGEPCLSCSSVVGAQHLVSSTGASGDVGSPGFGLPGLPGRAGVPGLKGEKGNFGEAGPAGSPGPPGPVGPAGIKGAKGEPCEPCPALSNLQDGDVRVVALPGPSGEKGEPGPPGFGLPGKQGKAGERGLKGQKGDAGNPGDPGTPGTTGRPGLSGEPGVQGPAGPKGEKGDGCTACPSLQGTVTDMAGRPGQPGPKGEQGPEGVGRPGKPGQPGLPGVQGPPGLKGVQGEPGPPGRGVQGPQGEPGAPGLPGIQGLPGPRGPPGPTGEKGAQGSPGVKGATGPVGPPGASVSGPPGRDGQQGQTGLRGTPGEKGPRGEKGEPGECSCPSQGDLIFSGMPGAPGLWMGSSWQPGPQGPPGIPGPPGPPGVPGLQGVPGNNGLPGQPGLTAELGSLPIEQHLLKSICGDCVQGQRAHPGYLVEKGEKGDQGIPGVPGLDNCAQCFLSLERPRAEEARGDNSEGDPGCVGSPGLPGPPGLPGQRGEEGPPGMRGSPGPPGPIGPPGFPGAVGSPGLPGLQGERGLTGLTGDKGEPGPPGQPGYPGATGPPGLPGIKGERGYTGSAGEKGEPGPPGSEGLPGPPGPAGPRGERGPQGNSGEKGDQGFQGQPGFPGPPGPPGFPGKVGSPGPPGPQAEKGSEGIRGPSGLPGSPGPPGPPGIQGPAGLDGLDGKDGKPGLRGDPGPAGPPGLMGPPGFKGKTGHPGLPGPKGDCGKPGPPGSTGRPGAEGEPGAMGPQGRPGPPGHVGPPGPPGQPGPAGISAVGLKGDRGATGERGLAGLPGQPGPPGHPGPPGEPGTDGAAGKEGPPGKQGFYGPPGPKGDPGAAGQKGQAGEKGRAGMPGGPGKSGSMGPVGPPGPAGERGHPGAPGPSGSPGLPGVPGSMGDMVNYDEIKRFIRQEIIKMFDERMAYYTSRMQFPMEMAAAPGRPGPPGKDGAPGRPGAPGSPGLPGQIGREGRQGLPGVRGLPGTKGEKGDIGIGIAGENGLPGPPGPQGPPGYGKMGATGPMGQQGIPGIPGPPGPMGQPGKAGHCNPSDCFGAMPMEQQYPPMKTMKGPFG.

Residues 1-21 (MWVSWAPGLWLLGLWATFGHG) form the signal peptide. An N-linked (GlcNAc...) asparagine glycan is attached at Asn47. In terms of domain architecture, Laminin G-like spans 50–231 (GFNLIHRLSL…LQQVHIYCDP (182 aa)). The interval 232–374 (ELVLEEGCCE…SPDAPLQCAE (143 aa)) is nonhelical region 10 (NC10). The segment covering 301–311 (AERGAKVHQET) has biased composition (basic and acidic residues). The segment at 301-509 (AERGAKVHQE…KGEKGDPCEV (209 aa)) is disordered. Asn327 carries an N-linked (GlcNAc...) asparagine glycan. Residues 375–423 (GPKGEKGESGALGPSGLPGSTGEKGQKGEKGDGGIKGVPGKPGRDGRPG) enclose the Collagen-like 1 domain. Residues 375-506 (GPKGEKGESG…PGVKGEKGDP (132 aa)) are triple-helical region 9 (COL9) with 3 imperfections. The span at 383-397 (SGALGPSGLPGSTGE) shows a compositional bias: low complexity. Residues 398–407 (KGQKGEKGDG) show a composition bias toward basic and acidic residues. Residues 449 to 460 (PGPPGLPGPPGI) show a composition bias toward pro residues. Over residues 486–495 (GKEGPGGKPG) the composition is skewed to gly residues. The tract at residues 507–521 (CEVCPTLPEGFQNFV) is nonhelical region 9 (NC9). The triple-helical region 8 (COL8) with 1 imperfection stretch occupies residues 522–555 (GLPGKPGPKGEPGDPVPARGDPGIQGIKGEKGEP). The short motif at 540 to 542 (RGD) is the Cell attachment site element. The nonhelical region 8 (NC8) stretch occupies residues 556 to 572 (CLSCSSVVGAQHLVSST). The interval 573–631 (GASGDVGSPGFGLPGLPGRAGVPGLKGEKGNFGEAGPAGSPGPPGPVGPAGIKGAKGEP) is triple-helical region 7 (COL7) with 1 imperfection. 2 Collagen-like domains span residues 573-633 (GASG…EPCE) and 667-721 (GLPG…GEKG). The disordered stretch occupies residues 604 to 917 (FGEAGPAGSP…PPGIPGPPGP (314 aa)). The tract at residues 632–652 (CEPCPALSNLQDGDVRVVALP) is nonhelical region 7 (NC7). The interval 653–723 (GPSGEKGEPG…AGPKGEKGDG (71 aa)) is triple-helical region 6 (COL6) with 1 imperfection. The segment covering 674–684 (KAGERGLKGQK) has biased composition (basic and acidic residues). Positions 686–702 (DAGNPGDPGTPGTTGRP) are enriched in low complexity. The interval 724–738 (CTACPSLQGTVTDMA) is nonhelical region 6 (NC6). The triple-helical region 5 (COL5) with 3 imperfections stretch occupies residues 739–876 (GRPGQPGPKG…RGEKGEPGEC (138 aa)). 3 stretches are compositionally biased toward low complexity: residues 766 to 781 (LPGVQGPPGLKGVQGE), 792 to 808 (PQGEPGAPGLPGIQGLP), and 826 to 846 (PGVKGATGPVGPPGASVSGPP). A Collagen-like 4 domain is found at 788 to 840 (GVQGPQGEPGAPGLPGIQGLPGPRGPPGPTGEKGAQGSPGVKGATGPVGPPGA). Over residues 864–873 (KGPRGEKGEP) the composition is skewed to basic and acidic residues. Positions 877–887 (SCPSQGDLIFS) are nonhelical region 5 (NC5). The 51-residue stretch at 888–938 (GMPGAPGLWMGSSWQPGPQGPPGIPGPPGPPGVPGLQGVPGNNGLPGQPGL) folds into the Collagen-like 5 domain. A triple-helical region 4 (COL4) with 2 imperfections region spans residues 888–939 (GMPGAPGLWMGSSWQPGPQGPPGIPGPPGPPGVPGLQGVPGNNGLPGQPGLT). Positions 905 to 917 (PQGPPGIPGPPGP) are enriched in pro residues. Residues 940-973 (AELGSLPIEQHLLKSICGDCVQGQRAHPGYLVEK) form a nonhelical region 4 (NC4) region. Residues 974-988 (GEKGDQGIPGVPGLD) form a triple-helical region 3 (COL3) region. The nonhelical region 3 (NC3) stretch occupies residues 989–1011 (NCAQCFLSLERPRAEEARGDNSE). Disordered stretches follow at residues 1001–1429 (RAEE…VPGS) and 1468–1517 (MAAA…PGTK). The Cell attachment site motif lies at 1006–1008 (RGD). Positions 1012-1433 (GDPGCVGSPG…PGVPGSMGDM (422 aa)) are triple-helical region 2 (COL2) with 2 imperfections. The 58-residue stretch at 1018–1075 (GSPGLPGPPGLPGQRGEEGPPGMRGSPGPPGPIGPPGFPGAVGSPGLPGLQGERGLTG) folds into the Collagen-like 6 domain. Composition is skewed to pro residues over residues 1044-1055 (PGPPGPIGPPGF), 1160-1169 (FPGPPGPPGF), and 1199-1208 (SPGPPGPPGI). Residues 1217 to 1226 (LDGKDGKPGL) are compositionally biased toward basic and acidic residues. A Cell attachment site motif is present at residues 1227–1229 (RGD). A compositionally biased stretch (low complexity) spans 1271–1284 (RPGAEGEPGAMGPQ). Composition is skewed to pro residues over residues 1286-1302 (RPGPPGHVGPPGPPGQP) and 1330-1342 (QPGPPGHPGPPGE). A compositionally biased stretch (low complexity) spans 1369–1378 (DPGAAGQKGQ). Positions 1386–1395 (GMPGGPGKSG) are enriched in gly residues. Over residues 1420-1429 (SPGLPGVPGS) the composition is skewed to low complexity. The segment at 1434-1472 (VNYDEIKRFIRQEIIKMFDERMAYYTSRMQFPMEMAAAP) is nonhelical region 2 (NC2). Collagen-like domains are found at residues 1472–1524 (PGRP…GDIG) and 1528–1576 (AGEN…GKAG). The triple-helical region 1 (COL1) with 2 imperfections stretch occupies residues 1473–1578 (GRPGPPGKDG…MGQPGKAGHC (106 aa)). Positions 1579–1604 (NPSDCFGAMPMEQQYPPMKTMKGPFG) are nonhelical region 1 (NC1).

This sequence belongs to the fibril-associated collagens with interrupted helices (FACIT) family. As to quaternary structure, homotrimer. Interacts with FBN1, fibronectin and integrins ITGA1/ITGB1 and ITGA2/ITGB1. Integrin ITGA1/ITGB1 binds to a unique site within COL16A1 located close to its C-terminal end between collagenous domains COL1-COL3. Post-translationally, prolines at the third position of the tripeptide repeating unit (G-X-Y) are hydroxylated in some or all of the chains. In terms of processing, glycosylated. As to expression, in papillary dermis, is a component of specialized fibrillin-1-containing microfibrils, whereas in territorial cartilage matrix, it is localized to a discrete population of thin, weakly banded collagen fibrils in association with other collagens (at protein level). In the placenta, where it is found in the amnion, a membranous tissue lining the amniotic cavity. Within the amnion, it is found in an acellular, relatively dense layer of a complex network of reticular fibers. Also located to a fibroblast layer beneath this dense layer. Exists in tissues in association with other types of collagen.

The protein resides in the secreted. Its subcellular location is the extracellular space. It is found in the extracellular matrix. Involved in mediating cell attachment and inducing integrin-mediated cellular reactions, such as cell spreading and alterations in cell morphology. The sequence is that of Collagen alpha-1(XVI) chain (COL16A1) from Homo sapiens (Human).